The primary structure comprises 190 residues: Large ribosomal subunit protein uL6A (190 aa).

It belongs to the universal ribosomal protein uL6 family. In terms of assembly, component of the large ribosomal subunit (LSU). Mature yeast ribosomes consist of a small (40S) and a large (60S) subunit. The 40S small subunit contains 1 molecule of ribosomal RNA (18S rRNA) and at least 33 different proteins. The large 60S subunit contains 3 rRNA molecules (25S, 5.8S and 5S rRNA) and at least 46 different proteins. uL6 lines the binding pocket for eukaryotic elongation factor 2 (eEF2).

It localises to the cytoplasm. The protein localises to the nucleus. Functionally, component of the ribosome, a large ribonucleoprotein complex responsible for the synthesis of proteins in the cell. The small ribosomal subunit (SSU) binds messenger RNAs (mRNAs) and translates the encoded message by selecting cognate aminoacyl-transfer RNA (tRNA) molecules. The large subunit (LSU) contains the ribosomal catalytic site termed the peptidyl transferase center (PTC), which catalyzes the formation of peptide bonds, thereby polymerizing the amino acids delivered by tRNAs into a polypeptide chain. The nascent polypeptides leave the ribosome through a tunnel in the LSU and interact with protein factors that function in enzymatic processing, targeting, and the membrane insertion of nascent chains at the exit of the ribosomal tunnel. The sequence is that of Large ribosomal subunit protein uL6A (rpl901) from Schizosaccharomyces pombe (strain 972 / ATCC 24843) (Fission yeast).